The sequence spans 712 residues: Anaerobic ribonucleoside-triphosphate reductase (712 aa).

The ATP-cone domain maps to 3–92; the sequence is PHVMKRDGCK…EYRHDRDIER (90 aa). In terms of domain architecture, Glycine radical spans 583 to 708; sequence KKVNPYDKID…VKRRVKHLGN (126 aa). Zn(2+) is bound by residues C644, C647, C662, and C665. At G681 the chain carries Glycine radical.

It belongs to the anaerobic ribonucleoside-triphosphate reductase family. Homodimer. Forms a tetramer composed of two NrdD and two NrdG subunits.

It catalyses the reaction a ribonucleoside 5'-triphosphate + formate + H(+) = a 2'-deoxyribonucleoside 5'-triphosphate + CO2 + H2O. The catalysed reaction is formate + ATP + H(+) = dATP + CO2 + H2O. The enzyme catalyses CTP + formate + H(+) = dCTP + CO2 + H2O. It carries out the reaction GTP + formate + H(+) = dGTP + CO2 + H2O. It catalyses the reaction UTP + formate + H(+) = dUTP + CO2 + H2O. With respect to regulation, activated under anaerobic conditions by NrdG, a tightly associated activase. Activation involves the formation of a glycyl radical at Gly-681. Exposure of the activated reductase to oxygen leads to C-terminal truncation and inactivation of the protein, by cleavage at the N-terminal side of Gly-681. The presence of zinc protects the protein from proteolysis and prevents the formation of disulfide bridges within it. The enzyme shows a basal activity in the absence of any effector, but reduction is stimulated up to 10-fold by an appropriate modulator (dGTP for ATP reduction, ATP for CTP and UTP reduction, and dTTP for GTP reduction). dGTP and dTTP inhibit the reduction of the incorrect substrate, and dATP inhibits reduction of all four. These modulators act as allosteric effectors. Its function is as follows. Catalyzes the conversion of ribonucleotides into deoxyribonucleotides, which are required for DNA synthesis and repair. Can reduce each of the four common ribonucleoside triphosphates. The chain is Anaerobic ribonucleoside-triphosphate reductase from Escherichia coli (strain K12).